The following is a 216-amino-acid chain: U1 small nuclear ribonucleoprotein A (216 aa).

2 RRM domains span residues 7–86 and 142–216; these read QTIY…YSKS and QILF…FAKK. The interval 97 to 142 is disordered; sequence TFKERPKKVKPPKPAPGTDEKKDKKKKPSSAENSNPNAQTEQPPNQ. The segment covering 126-142 has biased composition (polar residues); that stretch reads SAENSNPNAQTEQPPNQ.

The protein belongs to the RRM U1 A/B'' family. In terms of assembly, belongs to the spliceosome where it is associated with snRNP U1. Interacts with the SMN complex.

The protein localises to the nucleus. Its function is as follows. Binds stem loop II of U1 snRNA. It is the first snRNP to interact with pre-mRNA. This interaction is required for the subsequent binding of U2 snRNP and the U4/U6/U5 tri-snRNP. Plays a role in regulating sex-lethal splicing. The sequence is that of U1 small nuclear ribonucleoprotein A (snf) from Drosophila melanogaster (Fruit fly).